The sequence spans 150 residues: Protein Smg homolog (150 aa).

It belongs to the Smg family.

The protein is Protein Smg homolog of Leptothrix cholodnii (strain ATCC 51168 / LMG 8142 / SP-6) (Leptothrix discophora (strain SP-6)).